The primary structure comprises 339 residues: MRVYYDRDADINLIKSKKVAIIGYGSQGHAHALNLRDSGVMDVSVALREGSATAAKAAGEGLKVLSVADAAKWADVVMMLTPDELQGDIYSEHLAPNLKQGAALLFAHGLNIHFNLIEPRKDLDVAMVAPKGPGHTVRSEYKRGGGVPCLIAIAQDASGNAHDIALSYASAIGGGRAGIIETTFREECETDLFGEQVVLCGGLVELIRGGFETLVEAGYAPEMAYFECLHEVKLIVDLIYEGGIANMNYSISNTAEYGEYVTGPRIVTPETKAEMKRVLTDIQSGKFTRDWMLENKVNQTSFKATRAKAASHQIEEVGAKLRAMMPWIGANKLVDKAKN.

The 182-residue stretch at 1–182 (MRVYYDRDAD…GGGRAGIIET (182 aa)) folds into the KARI N-terminal Rossmann domain. Residues 24–27 (YGSQ), Arg-48, Ser-51, Thr-53, and 83–86 (DELQ) contribute to the NADP(+) site. Residue His-108 is part of the active site. Gly-134 contributes to the NADP(+) binding site. A KARI C-terminal knotted domain is found at 183–328 (TFREECETDL…AKLRAMMPWI (146 aa)). Mg(2+) contacts are provided by Asp-191, Glu-195, Glu-227, and Glu-231. Residue Ser-252 coordinates substrate.

It belongs to the ketol-acid reductoisomerase family. Requires Mg(2+) as cofactor.

It catalyses the reaction (2R)-2,3-dihydroxy-3-methylbutanoate + NADP(+) = (2S)-2-acetolactate + NADPH + H(+). The catalysed reaction is (2R,3R)-2,3-dihydroxy-3-methylpentanoate + NADP(+) = (S)-2-ethyl-2-hydroxy-3-oxobutanoate + NADPH + H(+). It participates in amino-acid biosynthesis; L-isoleucine biosynthesis; L-isoleucine from 2-oxobutanoate: step 2/4. The protein operates within amino-acid biosynthesis; L-valine biosynthesis; L-valine from pyruvate: step 2/4. In terms of biological role, involved in the biosynthesis of branched-chain amino acids (BCAA). Catalyzes an alkyl-migration followed by a ketol-acid reduction of (S)-2-acetolactate (S2AL) to yield (R)-2,3-dihydroxy-isovalerate. In the isomerase reaction, S2AL is rearranged via a Mg-dependent methyl migration to produce 3-hydroxy-3-methyl-2-ketobutyrate (HMKB). In the reductase reaction, this 2-ketoacid undergoes a metal-dependent reduction by NADPH to yield (R)-2,3-dihydroxy-isovalerate. The protein is Ketol-acid reductoisomerase (NADP(+)) of Methylocella silvestris (strain DSM 15510 / CIP 108128 / LMG 27833 / NCIMB 13906 / BL2).